A 316-amino-acid polypeptide reads, in one-letter code: Glutamyl endopeptidase (316 aa).

A signal peptide spans 1-30; the sequence is MVSKKSVKRGLITGLIGISIYSLGMHPAQA. Residues 31–94 constitute a propeptide that is removed on maturation; that stretch reads APSPHTPVSS…SPAKAPYSIK (64 aa). An intrachain disulfide couples C126 to C142. Catalysis depends on charge relay system residues H141 and S261. C275 and C279 form a disulfide bridge.

The protein belongs to the peptidase S1B family.

It is found in the secreted. It catalyses the reaction Preferential cleavage: Glu-|-Xaa, Asp-|-Xaa.. In terms of biological role, specific for hydrolysis of peptide bonds on the carboxyl side of acidic amino acid residues, with a strong preference for Glu. This chain is Glutamyl endopeptidase (blaSE), found in Bacillus licheniformis (strain ATCC 14580 / DSM 13 / JCM 2505 / CCUG 7422 / NBRC 12200 / NCIMB 9375 / NCTC 10341 / NRRL NRS-1264 / Gibson 46).